Reading from the N-terminus, the 160-residue chain is Nucleotide-binding protein TERTU_3542 (160 aa).

It belongs to the YajQ family.

Functionally, nucleotide-binding protein. This chain is Nucleotide-binding protein TERTU_3542, found in Teredinibacter turnerae (strain ATCC 39867 / T7901).